Consider the following 338-residue polypeptide: Tetraacyldisaccharide 4'-kinase (338 aa).

66–73 provides a ligand contact to ATP; the sequence is IAGGAGKT.

Belongs to the LpxK family.

It catalyses the reaction a lipid A disaccharide + ATP = a lipid IVA + ADP + H(+). The protein operates within glycolipid biosynthesis; lipid IV(A) biosynthesis; lipid IV(A) from (3R)-3-hydroxytetradecanoyl-[acyl-carrier-protein] and UDP-N-acetyl-alpha-D-glucosamine: step 6/6. Functionally, transfers the gamma-phosphate of ATP to the 4'-position of a tetraacyldisaccharide 1-phosphate intermediate (termed DS-1-P) to form tetraacyldisaccharide 1,4'-bis-phosphate (lipid IVA). The chain is Tetraacyldisaccharide 4'-kinase from Delftia acidovorans (strain DSM 14801 / SPH-1).